The primary structure comprises 173 residues: Adenine phosphoribosyltransferase (173 aa).

The protein belongs to the purine/pyrimidine phosphoribosyltransferase family. In terms of assembly, homodimer.

The protein resides in the cytoplasm. It carries out the reaction AMP + diphosphate = 5-phospho-alpha-D-ribose 1-diphosphate + adenine. The protein operates within purine metabolism; AMP biosynthesis via salvage pathway; AMP from adenine: step 1/1. In terms of biological role, catalyzes a salvage reaction resulting in the formation of AMP, that is energically less costly than de novo synthesis. The protein is Adenine phosphoribosyltransferase of Caldanaerobacter subterraneus subsp. tengcongensis (strain DSM 15242 / JCM 11007 / NBRC 100824 / MB4) (Thermoanaerobacter tengcongensis).